A 524-amino-acid polypeptide reads, in one-letter code: Phenylalanine--tRNA ligase alpha subunit (524 aa).

3 residues coordinate L-phenylalanine: Thr-362, Tyr-441, and Phe-467.

It belongs to the class-II aminoacyl-tRNA synthetase family. Phe-tRNA synthetase alpha subunit type 2 subfamily. In terms of assembly, tetramer of two alpha and two beta subunits. Mg(2+) serves as cofactor.

It localises to the cytoplasm. It catalyses the reaction tRNA(Phe) + L-phenylalanine + ATP = L-phenylalanyl-tRNA(Phe) + AMP + diphosphate + H(+). The polypeptide is Phenylalanine--tRNA ligase alpha subunit (Methanopyrus kandleri (strain AV19 / DSM 6324 / JCM 9639 / NBRC 100938)).